Here is a 396-residue protein sequence, read N- to C-terminus: MSEDEAQFHGNYDDYVTYLKRRIRQLELQVRMLEADKERLERELSRLRSEMSRLRQPPAFAGSVIEVLDDDRAIVQNYNGPRFVVRIAPWIDKSKLRPGTRVALDQRTMAIIEILPASKDPAVLGFEVVERPNVTYNDIGGLKKQLQELREAIELPLKHPELFEEVGIDPPKGVLLYGPPGCGKTLMAKAIAHEVNATFIRVVGSELVRKYIGEGARLVHELFELAKEKAPTIIFIDEIDAIGAKRLDETTGGEREVNRTLMQLLAEMDGFDPRGNVKVIAATNRPDILDPALLRPGRFDRLIEVPLPDFEGRLEILKVHTRRMKLRGVDLRLIAELTEGASGADLKAIATEAGMFAIRERRTYVTQEDFLKAIDKVLGNEKKIIQQIMSHEVIYG.

The stretch at 16–57 (VTYLKRRIRQLELQVRMLEADKERLERELSRLRSEMSRLRQP) forms a coiled coil. Residues 181-186 (GCGKTL) and histidine 320 each bind ATP. A docks into pockets in the proteasome alpha-ring to cause gate opening region spans residues 394–396 (IYG).

This sequence belongs to the AAA ATPase family. Homohexamer. The hexameric complex has a two-ring architecture resembling a top hat that caps the 20S proteasome core at one or both ends. Upon ATP-binding, the C-terminus of PAN interacts with the alpha-rings of the proteasome core by binding to the intersubunit pockets.

The protein localises to the cytoplasm. ATPase which is responsible for recognizing, binding, unfolding and translocation of substrate proteins into the archaeal 20S proteasome core particle. Is essential for opening the gate of the 20S proteasome via an interaction with its C-terminus, thereby allowing substrate entry and access to the site of proteolysis. Thus, the C-termini of the proteasomal ATPase function like a 'key in a lock' to induce gate opening and therefore regulate proteolysis. Unfolding activity requires energy from ATP hydrolysis, whereas ATP binding alone promotes ATPase-20S proteasome association which triggers gate opening, and supports translocation of unfolded substrates. This chain is Proteasome-activating nucleotidase, found in Pyrococcus furiosus (strain ATCC 43587 / DSM 3638 / JCM 8422 / Vc1).